Reading from the N-terminus, the 453-residue chain is Ribulose bisphosphate carboxylase large chain (453 aa).

Residues 1–2 (MS) constitute a propeptide that is removed on maturation. P3 carries the post-translational modification N-acetylproline. K14 carries the post-translational modification N6,N6,N6-trimethyllysine. 2 residues coordinate substrate: N123 and T173. The Proton acceptor role is filled by K175. K177 contributes to the substrate binding site. Mg(2+) is bound by residues K201, D203, and E204. Position 201 is an N6-carboxylysine (K201). The active-site Proton acceptor is the H294. Substrate-binding residues include R295, H327, and S379.

The protein belongs to the RuBisCO large chain family. Type I subfamily. As to quaternary structure, heterohexadecamer of 8 large chains and 8 small chains; disulfide-linked. The disulfide link is formed within the large subunit homodimers. Requires Mg(2+) as cofactor. Post-translationally, the disulfide bond which can form in the large chain dimeric partners within the hexadecamer appears to be associated with oxidative stress and protein turnover.

The protein localises to the plastid. Its subcellular location is the chloroplast. The catalysed reaction is 2 (2R)-3-phosphoglycerate + 2 H(+) = D-ribulose 1,5-bisphosphate + CO2 + H2O. The enzyme catalyses D-ribulose 1,5-bisphosphate + O2 = 2-phosphoglycolate + (2R)-3-phosphoglycerate + 2 H(+). RuBisCO catalyzes two reactions: the carboxylation of D-ribulose 1,5-bisphosphate, the primary event in carbon dioxide fixation, as well as the oxidative fragmentation of the pentose substrate in the photorespiration process. Both reactions occur simultaneously and in competition at the same active site. This Hydnophytum formicarum (Ant plant) protein is Ribulose bisphosphate carboxylase large chain.